Reading from the N-terminus, the 615-residue chain is Semenogelin-1 (615 aa).

The first 23 residues, 1-23 (MKPIIFLVLSLLLILEKQAAVMG), serve as a signal peptide directing secretion. At glutamine 24 the chain carries Pyrrolidone carboxylic acid. Disordered regions lie at residues 24–118 (QKGG…EHGK), 133–160 (GHAP…SQDS), and 172–585 (GKEQ…HRSY). A compositionally biased stretch (polar residues) spans 34 to 46 (SESSQFPHGQKGQ). The span at 50–80 (ARKDKQHAESKRSVSIEHTYHVDIPDHDQTR) shows a compositional bias: basic and acidic residues. Residues 81–91 (TSKQYDLNAQN) are compositionally biased toward polar residues. Residues 107–118 (FNHKQEGREHGK) are compositionally biased toward basic and acidic residues. Composition is skewed to polar residues over residues 138–160 (GTQN…SQDS), 177–196 (SVSG…SPVL), and 209–224 (TQNS…NVNE). Residues asparagine 148, asparagine 184, and asparagine 223 are each glycosylated (N-linked (GlcNAc...) asparagine). The span at 241-253 (QEDRLQHGSKDVF) shows a compositional bias: basic and acidic residues. Residues 254–265 (SKNQNQTRNPNQ) are compositionally biased toward polar residues. 2 N-linked (GlcNAc...) asparagine glycosylation sites follow: asparagine 258 and asparagine 275. Residues 283–300 (TEERRPNHGEKGIQKDAS) show a composition bias toward basic and acidic residues. Asparagine 306 carries an N-linked (GlcNAc...) asparagine glycan. Over residues 308–317 (TEDKMHDKSQ) the composition is skewed to basic and acidic residues. N-linked (GlcNAc...) asparagine glycosylation occurs at asparagine 332. Residues 341–358 (TEERRPNHGEKGIQKDAS) are compositionally biased toward basic and acidic residues. N-linked (GlcNAc...) asparagine glycosylation is present at asparagine 364. Positions 366 to 375 (TEDKMHDKSQ) are enriched in basic and acidic residues. Asparagine 390 carries N-linked (GlcNAc...) asparagine glycosylation. The segment covering 399-416 (TEERRPNHGEKGIQKDAS) has biased composition (basic and acidic residues). The N-linked (GlcNAc...) asparagine glycan is linked to asparagine 422. The segment covering 424 to 433 (TEDKMHDKSQ) has biased composition (basic and acidic residues). Asparagine 448 carries an N-linked (GlcNAc...) asparagine glycan. The segment covering 457 to 474 (TEERRPNHGEKGIQKDAS) has biased composition (basic and acidic residues). A glycan (N-linked (GlcNAc...) asparagine) is linked at asparagine 480. The span at 481–491 (KTEDKMHDKSQ) shows a compositional bias: basic and acidic residues. An N-linked (GlcNAc...) asparagine glycan is attached at asparagine 506. A compositionally biased stretch (basic and acidic residues) spans 515 to 532 (TEERRPNHGEKGIQKDAS). The N-linked (GlcNAc...) asparagine glycan is linked to asparagine 538. Over residues 539 to 549 (KTEDEKHDKSQ) the composition is skewed to basic and acidic residues. Residues 550 to 563 (KQVTTPSQDQQSGQ) show a composition bias toward polar residues.

The protein belongs to the semenogelin family. In terms of assembly, occurs in disulfide-linked complexes. Post-translationally, transglutaminase substrate. In terms of processing, rapidly cleaved after ejaculation by KLK3/PSA, resulting in liquefaction of the semen coagulum and the progressive release of motile spermatozoa.

It localises to the secreted. Functionally, predominant protein in semen. It participates in the formation of a gel matrix entrapping the accessory gland secretions and ejaculated spermatozoa. Fragments of semenogelin and/or fragments of the related proteins may contribute to the activation of progressive sperm movements as the gel-forming proteins are fragmented by KLK3/PSA. The protein is Semenogelin-1 (SEMG1) of Saguinus oedipus (Cotton-top tamarin).